The following is a 515-amino-acid chain: ATP synthase subunit alpha (515 aa).

169-176 (GDRQTGKT) contributes to the ATP binding site.

Belongs to the ATPase alpha/beta chains family. As to quaternary structure, F-type ATPases have 2 components, CF(1) - the catalytic core - and CF(0) - the membrane proton channel. CF(1) has five subunits: alpha(3), beta(3), gamma(1), delta(1), epsilon(1). CF(0) has three main subunits: a(1), b(2) and c(9-12). The alpha and beta chains form an alternating ring which encloses part of the gamma chain. CF(1) is attached to CF(0) by a central stalk formed by the gamma and epsilon chains, while a peripheral stalk is formed by the delta and b chains.

The protein localises to the cell inner membrane. The enzyme catalyses ATP + H2O + 4 H(+)(in) = ADP + phosphate + 5 H(+)(out). In terms of biological role, produces ATP from ADP in the presence of a proton gradient across the membrane. The alpha chain is a regulatory subunit. In Neisseria gonorrhoeae (strain ATCC 700825 / FA 1090), this protein is ATP synthase subunit alpha.